Here is a 579-residue protein sequence, read N- to C-terminus: Tyrosine 3-monooxygenase (579 aa).

The span at 105 to 114 shows a compositional bias: acidic residues; the sequence is VEFESVEQEQ. The disordered stretch occupies residues 105–132; sequence VEFESVEQEQSESQSQEPEGNQQPTKND. Fe cation contacts are provided by His-409, His-414, and Glu-454.

This sequence belongs to the biopterin-dependent aromatic amino acid hydroxylase family. It depends on Fe(2+) as a cofactor.

It localises to the cytoplasm. Its subcellular location is the perinuclear region. The protein resides in the cell projection. The protein localises to the axon. The enzyme catalyses (6R)-L-erythro-5,6,7,8-tetrahydrobiopterin + L-tyrosine + O2 = (4aS,6R)-4a-hydroxy-L-erythro-5,6,7,8-tetrahydrobiopterin + L-dopa. The protein operates within catecholamine biosynthesis; dopamine biosynthesis; dopamine from L-tyrosine: step 1/2. With respect to regulation, phosphorylation leads to an increase in the catalytic activity. Functionally, plays an important role in the physiology of adrenergic neurons. The polypeptide is Tyrosine 3-monooxygenase (ple) (Drosophila melanogaster (Fruit fly)).